We begin with the raw amino-acid sequence, 478 residues long: MAGVEEASSFGGHLNRDLDPDDREEGTSSTAEEAAKKKRRKKKKGKGAVSAGQQELDKESGTSVDEVAKQLERQALEEKEKDDDDEDGDGDGDGAAGKKKKKKKKKRGPRVQTDPPSVPICDLYPNGVFPKGQECEYPPTQDGRTAAWRTTSEEKKALDQASEEIWNDFREAAEAHRQVRKYVMSWIKPGMTMIEICEKLEDCSRKLIKENGLNAGLAFPTGCSLNNCAAHYTPNAGDTTVLQYDDICKIDFGTHISGRIIDCAFTVTFNPKYDILLKAVKDATNTGIKCAGIDVRLCDVGEAIQEVMESYEVEIDGKTYQVKPIRNLNGHSIGPYRIHAGKTVPIVKGGEATRMEEGEVYAIETFGSTGKGVVHDDMECSHYMKNFDVGHVPIRLPRTKHLLNVINENFGTLAFCRRWLDRLGESKYLMALKNLCDLGIVDPYPPLCDIKGSYTAQFEHTILLRPTCKEVVSRGDDY.

Residues 1–123 (MAGVEEASSF…DPPSVPICDL (123 aa)) are disordered. A2 is subject to N-acetylalanine. The segment covering 36 to 46 (KKKRRKKKKGK) has biased composition (basic residues). The segment covering 55–79 (ELDKESGTSVDEVAKQLERQALEEK) has biased composition (basic and acidic residues). 2 positions are modified to phosphoserine; alternate: S60 and S63. S60 and S63 each carry an O-linked (GlcNAc) serine; alternate glycan. The segment covering 80 to 92 (EKDDDDEDGDGDG) has biased composition (acidic residues). The span at 97–109 (GKKKKKKKKKRGP) shows a compositional bias: basic residues. Substrate is bound at residue H231. Positions 251, 262, and 331 each coordinate a divalent metal cation. H339 contributes to the substrate binding site. Residues E364 and E459 each contribute to the a divalent metal cation site.

It belongs to the peptidase M24A family. Methionine aminopeptidase eukaryotic type 2 subfamily. As to quaternary structure, binds EIF2S1 at low magnesium concentrations. Interacts strongly with the eIF-2 gamma-subunit EIF2S3. Requires Co(2+) as cofactor. It depends on Zn(2+) as a cofactor. The cofactor is Mn(2+). Fe(2+) is required as a cofactor. In terms of processing, O-glycosylated; contains 12 O-linked GlcNAc. Post-translationally, contains approximately 12 O-linked N-acetylglucosamine (GlcNAc) residues. O-glycosylation is required for EIF2S1 binding.

Its subcellular location is the cytoplasm. It carries out the reaction Release of N-terminal amino acids, preferentially methionine, from peptides and arylamides.. Its function is as follows. Cotranslationally removes the N-terminal methionine from nascent proteins. The N-terminal methionine is often cleaved when the second residue in the primary sequence is small and uncharged (Met-Ala-, Cys, Gly, Pro, Ser, Thr, or Val). Protects eukaryotic initiation factor EIF2S1 from translation-inhibiting phosphorylation by inhibitory kinases such as EIF2AK2/PKR and EIF2AK1/HCR. Plays a critical role in the regulation of protein synthesis. In Rattus norvegicus (Rat), this protein is Methionine aminopeptidase 2 (Metap2).